The chain runs to 306 residues: Large ribosomal subunit protein mL45 (306 aa).

A disordered region spans residues 287 to 306 (LKPEEEYEEAQGEAQKPQLA).

Belongs to the mitochondrion-specific ribosomal protein mL45 family. As to quaternary structure, component of the mitochondrial large ribosomal subunit (mt-LSU). Mature mammalian 55S mitochondrial ribosomes consist of a small (28S) and a large (39S) subunit. The 28S small subunit contains a 12S ribosomal RNA (12S mt-rRNA) and 30 different proteins. The 39S large subunit contains a 16S rRNA (16S mt-rRNA), a copy of mitochondrial valine transfer RNA (mt-tRNA(Val)), which plays an integral structural role, and 52 different proteins.

The protein resides in the mitochondrion. Its function is as follows. Component of the mitochondrial large ribosomal subunit (mt-LSU). Within the mitochondrial ribosomes, required to direct the nascent polypeptide toward the tunnel exit and position the exit at a distance from the membrane surface. The protein is Large ribosomal subunit protein mL45 of Homo sapiens (Human).